A 220-amino-acid chain; its full sequence is uncharacterized protein (220 aa).

Positions 165–202 (DKYEDLISDYNKIMEKYREVIKSEIEKYKALSKRKNDI) form a coiled coil.

This is an uncharacterized protein from Pasteurella multocida (strain Pm70).